A 203-amino-acid chain; its full sequence is Small ribosomal subunit protein uS3 (203 aa).

Belongs to the universal ribosomal protein uS3 family. Part of the 30S ribosomal subunit. Forms a tight complex with proteins S10 and S14.

In terms of biological role, binds the lower part of the 30S subunit head. Binds mRNA in the 70S ribosome, positioning it for translation. The sequence is that of Small ribosomal subunit protein uS3 from Carsonella ruddii (strain PV).